The following is a 538-amino-acid chain: CTP synthase (538 aa).

The segment at 1-267 (MDRAKFIFVT…LTPIARRFNL (267 aa)) is amidoligase domain. Serine 15 is a binding site for CTP. Serine 15 contributes to the UTP binding site. Residues 16-21 (SLGKGI) and aspartate 73 each bind ATP. Residues aspartate 73 and glutamate 141 each coordinate Mg(2+). Residues 148–150 (DME), 188–193 (KTKPTQ), and lysine 224 contribute to the CTP site. Residues 188–193 (KTKPTQ) and lysine 224 contribute to the UTP site. Residues 292 to 538 (KIGFVGKYLS…DFIKSALSKS (247 aa)) enclose the Glutamine amidotransferase type-1 domain. Glycine 351 is a binding site for L-glutamine. Catalysis depends on cysteine 378, which acts as the Nucleophile; for glutamine hydrolysis. L-glutamine contacts are provided by residues 379-382 (LGMQ), glutamate 402, and arginine 469. Residues histidine 513 and glutamate 515 contribute to the active site.

This sequence belongs to the CTP synthase family. In terms of assembly, homotetramer.

It carries out the reaction UTP + L-glutamine + ATP + H2O = CTP + L-glutamate + ADP + phosphate + 2 H(+). It catalyses the reaction L-glutamine + H2O = L-glutamate + NH4(+). The enzyme catalyses UTP + NH4(+) + ATP = CTP + ADP + phosphate + 2 H(+). Its pathway is pyrimidine metabolism; CTP biosynthesis via de novo pathway; CTP from UDP: step 2/2. With respect to regulation, allosterically activated by GTP, when glutamine is the substrate; GTP has no effect on the reaction when ammonia is the substrate. The allosteric effector GTP functions by stabilizing the protein conformation that binds the tetrahedral intermediate(s) formed during glutamine hydrolysis. Inhibited by the product CTP, via allosteric rather than competitive inhibition. Functionally, catalyzes the ATP-dependent amination of UTP to CTP with either L-glutamine or ammonia as the source of nitrogen. Regulates intracellular CTP levels through interactions with the four ribonucleotide triphosphates. The chain is CTP synthase from Helicobacter pylori (strain ATCC 700392 / 26695) (Campylobacter pylori).